A 407-amino-acid chain; its full sequence is Arrestin red cell isoform 1 (407 aa).

It belongs to the arrestin family.

Its subcellular location is the cytoplasm. This chain is Arrestin red cell isoform 1, found in Oncorhynchus mykiss (Rainbow trout).